Reading from the N-terminus, the 455-residue chain is tRNA modification GTPase MnmE (455 aa).

Residues Arg24, Glu81, and Lys120 each contribute to the (6S)-5-formyl-5,6,7,8-tetrahydrofolate site. In terms of domain architecture, TrmE-type G spans 216–378; that stretch reads GMTVVIAGRP…LREHLKACMG (163 aa). Asn226 contacts K(+). GTP is bound by residues 226 to 231, 245 to 251, 270 to 273, 335 to 338, and 359 to 361; these read NAGKSS, TDIAGTT, DTAG, NKAD, and SAR. Ser230 lines the Mg(2+) pocket. K(+) is bound by residues Thr245, Ile247, and Thr250. Thr251 contacts Mg(2+). Residue Lys455 participates in (6S)-5-formyl-5,6,7,8-tetrahydrofolate binding.

It belongs to the TRAFAC class TrmE-Era-EngA-EngB-Septin-like GTPase superfamily. TrmE GTPase family. Homodimer. Heterotetramer of two MnmE and two MnmG subunits. Requires K(+) as cofactor.

It localises to the cytoplasm. In terms of biological role, exhibits a very high intrinsic GTPase hydrolysis rate. Involved in the addition of a carboxymethylaminomethyl (cmnm) group at the wobble position (U34) of certain tRNAs, forming tRNA-cmnm(5)s(2)U34. This chain is tRNA modification GTPase MnmE, found in Pseudomonas aeruginosa (strain UCBPP-PA14).